The sequence spans 322 residues: 8-oxo-(d)GTP phosphatase (322 aa).

Positions 1-21 are disordered; the sequence is MMPVDDLQEIPLSKDTTEKSK. A Nudix hydrolase domain is found at 22–156; it reads HTVRAAGAVL…DDRKVLRRFV (135 aa). Residues 55–58, Asp60, and 65–67 each bind substrate; these read RPRY and KGK. The Mg(2+) site is built by Lys65, Glu81, and Glu85. The short motif at 66-87 is the Nudix box element; sequence GKLDQGETEPVAAAREIHEETG. Tyr101, Lys108, Glu127, and Tyr145 together coordinate substrate. Glu127 is a binding site for Mg(2+).

Belongs to the Nudix hydrolase family. In terms of assembly, forms head-to-tail homodimers. It depends on Mg(2+) as a cofactor.

It catalyses the reaction 8-oxo-dGTP + H2O = 8-oxo-dGDP + phosphate + H(+). The catalysed reaction is 8-oxo-GTP + H2O = 8-oxo-GDP + phosphate + H(+). The enzyme catalyses 8-oxo-dGDP + H2O = 8-oxo-dGMP + phosphate + H(+). It carries out the reaction 8-oxo-GDP + H2O = 8-oxo-GMP + phosphate + H(+). It catalyses the reaction P(1),P(6)-bis(5'-adenosyl) hexaphosphate + H2O = 2 ATP + 2 H(+). The catalysed reaction is P(1),P(5)-bis(5'-adenosyl) pentaphosphate + H2O = ADP + ATP + 2 H(+). The enzyme catalyses P(1),P(4)-bis(5'-adenosyl) tetraphosphate + H2O = AMP + ATP + 2 H(+). Its activity is regulated as follows. Ap4A hydrolysis is inhibited by fluoride ions. In terms of biological role, catalyzes the conversion of 8-oxo-dGTP to 8-oxo-dGDP, and 8-oxo-GTP to 8-oxo-GDP. At high enzyme concentrations, can also catalyze the conversion of 8-oxo-dGDP to 8-oxo-dGMP, and 8-oxo-GDP to 8-oxo-GMP. In addition, catalyzes the hydrolysis of the diadenosine polyphosphates diadenosine hexaphosphate (Ap6A), diadenosine pentaphosphate (Ap5A) and diadenosine tetraphosphate (Ap4A). The polypeptide is 8-oxo-(d)GTP phosphatase (Mycolicibacterium smegmatis (strain ATCC 700084 / mc(2)155) (Mycobacterium smegmatis)).